The following is a 308-amino-acid chain: Oxygen-dependent coproporphyrinogen-III oxidase (308 aa).

Position 100 (serine 100) interacts with substrate. A divalent metal cation-binding residues include histidine 104 and histidine 114. The Proton donor role is filled by histidine 114. Substrate is bound at residue asparagine 116 to arginine 118. Positions 153 and 183 each coordinate a divalent metal cation. The interval tyrosine 248 to lysine 283 is important for dimerization. Glycine 266–arginine 268 contacts substrate.

This sequence belongs to the aerobic coproporphyrinogen-III oxidase family. Homodimer. The cofactor is a divalent metal cation.

The protein resides in the cytoplasm. It carries out the reaction coproporphyrinogen III + O2 + 2 H(+) = protoporphyrinogen IX + 2 CO2 + 2 H2O. It functions in the pathway porphyrin-containing compound metabolism; protoporphyrin-IX biosynthesis; protoporphyrinogen-IX from coproporphyrinogen-III (O2 route): step 1/1. Involved in the heme biosynthesis. Catalyzes the aerobic oxidative decarboxylation of propionate groups of rings A and B of coproporphyrinogen-III to yield the vinyl groups in protoporphyrinogen-IX. The chain is Oxygen-dependent coproporphyrinogen-III oxidase from Francisella tularensis subsp. holarctica (strain LVS).